We begin with the raw amino-acid sequence, 758 residues long: Glucocorticoid receptor (758 aa).

2 disordered regions span residues 1–61 (MDPG…SANG) and 349–382 (GMSS…PSGP). Residues 1 to 386 (MDPGGLKHSK…AKPSGPTHKI (386 aa)) are modulating. The segment covering 26–42 (GSFSGDTGGSKSTTSTS) has biased composition (low complexity). 2 NR C4-type zinc fingers span residues 387–407 (CLVC…CGSC) and 432–456 (CAGR…FRKC). Residues 387-461 (CLVCSDEASG…RFRKCLQAGM (75 aa)) constitute a DNA-binding region (nuclear receptor). A hinge region spans residues 462 to 498 (NLEARKNKKLIRLKGQQTTMEPNPPPPDERACALIPK). The region spanning 499–733 (SMPQLVPTML…FPEMLAEIIS (235 aa)) is the NR LBD domain.

This sequence belongs to the nuclear hormone receptor family. NR3 subfamily. Heteromultimeric cytoplasmic complex with HSP90AA1, HSPA1A/HSPA1B, and FKBP5 or another immunophilin such as PPID, STIP1, or the immunophilin homolog PPP5C. Upon ligand binding FKBP5 dissociates from the complex and FKBP4 takes its place, thereby linking the complex to dynein and mediating transport to the nucleus, where the complex dissociates. Directly interacts with UNC45A. Binds to DNA as a homodimer, and as heterodimer with NR3C2 or the retinoid X receptor. Binds STAT5A and STAT5B homodimers and heterodimers. Interacts with NRIP1, POU2F1, POU2F2 and TRIM28. Interacts with several coactivator complexes, including the SMARCA4 complex, CREBBP/EP300, TADA2L (Ada complex) and p160 coactivators such as NCOA2 and NCOA6. Interaction with BAG1 inhibits transactivation. Interacts with HEXIM1, PELP1 and TGFB1I1. Interacts with NCOA1, NCOA3, SMARCA4, SMARCC1, SMARCD1, and SMARCE1. In terms of processing, phosphorylated in the absence of hormone; becomes hyperphosphorylated in the presence of glucocorticoids. May be dephosphorylated by PPP5C, attenuates NR3C1 action. Isoform 1 is expressed in all tissues tested including liver, gills, intestine, skeletal muscle, kidney, heart, spleen, stomach, brain, pituitary, ovary, testis, skin and bladder. Isoform 2 is found only in testis.

The protein resides in the cytoplasm. It is found in the nucleus. It localises to the mitochondrion. Its subcellular location is the cytoskeleton. The protein localises to the spindle. The protein resides in the microtubule organizing center. It is found in the centrosome. Receptor for glucocorticoids (GC). Has a dual mode of action: as a transcription factor that binds to glucocorticoid response elements (GRE), both for nuclear and mitochondrial DNA, and as a modulator of other transcription factors. Affects inflammatory responses, cellular proliferation and differentiation in target tissues. Involved in chromatin remodeling. Plays a role in rapid mRNA degradation by binding to the 5' UTR of target mRNAs and interacting with PNRC2 in a ligand-dependent manner which recruits the RNA helicase UPF1 and the mRNA-decapping enzyme DCP1A, leading to RNA decay. Could act as a coactivator for STAT5-dependent transcription upon growth hormone (GH) stimulation and could reveal an essential role of hepatic GR in the control of body growth. Mediates glucocorticoid-induced apoptosis. Promotes accurate chromosome segregation during mitosis. May act as a tumor suppressor. May play a negative role in adipogenesis through the regulation of lipolytic and antilipogenic gene expression. The chain is Glucocorticoid receptor (nr3c1) from Oncorhynchus mykiss (Rainbow trout).